The primary structure comprises 928 residues: Sodium/calcium exchanger 3 (928 aa).

An N-terminal signal peptide occupies residues 1–30 (MAWLRLQPLTSAFLHFGLVTFVLFLNCLRA). Topologically, residues 31–73 (EAGDSGDVPSAGQNNESCSGSSDCKEGVILPIWYPENPSLGDK) are extracellular. Asn-45 is a glycosylation site (N-linked (GlcNAc...) asparagine). Residues 74-94 (IARVIVYFVALIYMFLGVSII) form a helical membrane-spanning segment. Topologically, residues 95-147 (ADRFMASIEVITSQEREVTIKKPNGETSTTTIRVWNETVSNLTLMALGSSAPE) are cytoplasmic. A helical transmembrane segment spans residues 148-168 (ILLSLIEVCGHGFIAGDLGPS). Residue Thr-169 is a topological domain, extracellular. The helical transmembrane segment at 170 to 190 (IVGSAAFNMFIIIGICVYVIP) threads the bilayer. Residues 191 to 201 (DGETRKIKHLR) lie on the Cytoplasmic side of the membrane. The helical transmembrane segment at 202–222 (VFFVTAAWSIFAYIWLYMILA) threads the bilayer. The Extracellular segment spans residues 223 to 230 (VFSPGVVQ). The chain crosses the membrane as a helical span at residues 231–251 (VWEGLLTLFFFPVCVLLAWVA). Over 252-727 (DKRLLFYKYM…DESGEERLPS (476 aa)) the chain is Cytoplasmic. Residues 253 to 272 (KRLLFYKYMHKKYRTDKHRG) form a putative calmodulin-binding region region. Calx-beta domains follow at residues 390–485 (EPED…VRLS) and 519–618 (ATVT…VIEM). Positions 409, 445, 470, 471, 473, 475, 478, 525, 526, 527, 543, 579, 605, and 673 each coordinate Ca(2+). Residues 728-748 (CFDYVMHFLTVFWKVLFACVP) traverse the membrane as a helical segment. Residues 749–755 (PTEYCHG) lie on the Extracellular side of the membrane. Residues 756–776 (WACFVVSILIIGMLTAIIGDL) traverse the membrane as a helical segment. Residues 777 to 779 (ASH) lie on the Cytoplasmic side of the membrane. A helical transmembrane segment spans residues 780–800 (FGCTIGLKDSVTAVVFVAFGT). The Extracellular segment spans residues 801–829 (SVPDTFASKAAALQDVYADASIGNVTGSN). N-linked (GlcNAc...) asparagine glycosylation is present at Asn-824. Residues 830-850 (AVNVFLGIGLAWSVAAIYWAM) traverse the membrane as a helical segment. The Cytoplasmic portion of the chain corresponds to 851–861 (QGQEFHVSAGT). The helical transmembrane segment at 862-882 (LAFSVTLFTIFAFVCLSVLLY) threads the bilayer. Residues 883-904 (RRRPHLGGELGGPRGCKLATTW) lie on the Extracellular side of the membrane. The chain crosses the membrane as a helical span at residues 905–925 (LFVSLWLLYILFATLEAYCYI). Residues 926-928 (KGF) lie on the Cytoplasmic side of the membrane.

Belongs to the Ca(2+):cation antiporter (CaCA) (TC 2.A.19) family. SLC8 subfamily. In terms of assembly, interacts with AKAP1. Detected in gray and white matter in the spinal cord. Detected in hippocampus neurons. Detected in brain cortex neurons. Detected in skeletal muscle (at protein level). Isoform 1 and isoform 2 are highly expressed in brain; levels are higher for isoform 2. Isoform 1 and isoform 2 are detected in soleus muscle; levels are higher for isoform 1. Detected in gastrocnemius muscle.

The protein resides in the cell membrane. The protein localises to the perikaryon. It is found in the cell projection. It localises to the dendrite. Its subcellular location is the dendritic spine. The protein resides in the sarcolemma. The protein localises to the cytoplasm. It is found in the sarcoplasm. It localises to the cell junction. Its subcellular location is the mitochondrion outer membrane. The protein resides in the perinuclear region. The protein localises to the endoplasmic reticulum membrane. It carries out the reaction Ca(2+)(in) + 3 Na(+)(out) = Ca(2+)(out) + 3 Na(+)(in). Calcium transport is stimulated by cytoplasmic Ca(2+) and is inhibited by Na(+). Isoform 1 is more sensitive to stimulation by Ca(2+) than isoform 2. Isoform 2 is more sensitive to inactivation by Na(+). Mediates the electrogenic exchange of Ca(2+) against Na(+) ions across the cell membrane, and thereby contributes to the regulation of cytoplasmic Ca(2+) levels and Ca(2+)-dependent cellular processes. Contributes to cellular Ca(2+) homeostasis in excitable cells, both in muscle and in brain. In a first phase, voltage-gated channels mediate the rapid increase of cytoplasmic Ca(2+) levels due to release of Ca(2+) stores from the endoplasmic reticulum. SLC8A3 mediates the export of Ca(2+) from the cell during the next phase, so that cytoplasmic Ca(2+) levels rapidly return to baseline. Contributes to Ca(2+) transport during excitation-contraction coupling in muscle. In neurons, contributes to the rapid decrease of cytoplasmic Ca(2+) levels back to baseline after neuronal activation, and thereby contributes to modulate synaptic plasticity, learning and memory. Required for normal oligodendrocyte differentiation and for normal myelination. Mediates Ca(2+) efflux from mitochondria and contributes to mitochondrial Ca(2+) ion homeostasis. Isoform 1 displays higher calcium exchanger activity than isoform 2, probably because isoform 1 has a lower threshold for activation by cytoplasmic Ca(2+). The protein is Sodium/calcium exchanger 3 of Mus musculus (Mouse).